A 948-amino-acid chain; its full sequence is Receptor-like protein 45 (948 aa).

The signal sequence occupies residues 1–26 (MSSSKLMDFGLTWIIMMMILLQGCRS). Residues 27 to 897 (CIESERQGLL…EDDDESGLLD (871 aa)) lie on the Extracellular side of the membrane. N-linked (GlcNAc...) asparagine glycans are attached at residues Asn99 and Asn113. 2 LRR repeats span residues 106-129 (FEELQSLNLSSGYFKGWFDERKGG) and 135-162 (LRNLETLDLGVNFYDTSVLPYLNEAVSL). Residues 163 to 183 (KTLILHDNLFKGGFPVQELIN) form an LRR 3; degenerate repeat. N-linked (GlcNAc...) asparagine glycosylation is present at Asn183. LRR repeat units lie at residues 184–208 (LTSLEVLDLKFNKFSGQLPTQELTN), 210–233 (RNLRALDLSNNKFSGSLQKQGICR), 234–257 (LEQLQELRLSRNRFEGEIPLCFSR), 258–284 (FSKLRVLDLSSNHLSGKIPYFISDFKS), 286–306 (EYLSLLDNDFEGLFSLGLITE), 307–332 (LTELKVFKLSSRSGMLQIVETNVSGG), 334–357 (QSQLSSIMLSHCNLGKIPGFLWYQ), 358–381 (QELRVIDLSNNILSGVFPTWLLEN), 382–404 (NTELQALLLQNNSFKTLTLPRTM), 405–429 (RRLQILDLSVNNFNNQLPKDVGLIL), 430–453 (ASLRHLNLSNNEFLGNMPSSMARM), 454–477 (ENIEFMDLSYNNFSGKLPRNLFTG), 479–502 (YSLSWLKLSHNRFSGPIIRKSSDE), 503–526 (TSLITLIMDNNMFTGKIPRTLLNL), 527–549 (RMLSVIDLSNNLLTGTIPRWLGN), 550–573 (FFLEVLRISNNRLQGAIPPSLFNI), 575–595 (YLWLLDLSGNFLSGSLPLRSS), 596–618 (SDYGYILDLHNNNLTGSIPDTLW), 619–640 (YGLRLLDLRNNKLSGNIPLFRS), 642–665 (PSISVVLLRENNLTGKIPVELCGL), 666–689 (SNVRMLDFAHNRLNESIPSCVTNL), 758–782 (LNQMFGLDLSSNELSGNIPEELGDL), 783–805 (KRVRSLNLSRNSLSGSIPGSFSN), 807–831 (RSIESLDLSFNKLHGTIPSQLTLLQ), and 833–855 (LVVFNVSYNNLSGVIPQGKQFNT). An N-linked (GlcNAc...) asparagine glycan is attached at Asn328. Asn381 and Asn392 each carry an N-linked (GlcNAc...) asparagine glycan. Residues Asn436 and Asn465 are each glycosylated (N-linked (GlcNAc...) asparagine). N-linked (GlcNAc...) asparagine glycosylation occurs at Asn608. N-linked (GlcNAc...) asparagine glycans are attached at residues Asn653, Asn679, and Asn688. Asn789 carries N-linked (GlcNAc...) asparagine glycosylation. Residues Asn837 and Asn842 are each glycosylated (N-linked (GlcNAc...) asparagine). A helical transmembrane segment spans residues 898-918 (IVVLWWSLGTTYVTVMMGFLV). Residues 919–948 (FLCFDSPWRRAWFCLVDTFIDRVKDVLGVI) are Cytoplasmic-facing.

It belongs to the RLP family.

The protein resides in the cell membrane. The polypeptide is Receptor-like protein 45 (Arabidopsis thaliana (Mouse-ear cress)).